The following is a 434-amino-acid chain: Alpha-enolase (434 aa).

N-acetylserine is present on Ser-2. An N6-acetyllysine modification is found at Lys-5. Residue Ser-40 coordinates Mg(2+). A Phosphotyrosine modification is found at Tyr-44. An N6-acetyllysine; alternate modification is found at Lys-60. Lys-60 carries the post-translational modification N6-succinyllysine; alternate. An N6-acetyllysine mark is found at Lys-64 and Lys-71. At Lys-89 the chain carries N6-acetyllysine; alternate. Lys-89 carries the N6-succinyllysine; alternate modification. Residues Lys-92 and Lys-126 each carry the N6-acetyllysine modification. The substrate site is built by His-158 and Glu-167. An N6-acetyllysine mark is found at Lys-193 and Lys-199. An N6-acetyllysine; alternate modification is found at Lys-202. Residue Lys-202 forms a Glycyl lysine isopeptide (Lys-Gly) (interchain with G-Cter in SUMO2); alternate linkage. The active-site Proton donor is Glu-210. N6-acetyllysine; alternate occurs at positions 228 and 233. Position 228 is an N6-succinyllysine; alternate (Lys-228). Position 228 is an N6-(2-hydroxyisobutyryl)lysine; alternate (Lys-228). At Lys-233 the chain carries N6-malonyllysine; alternate. Asp-245 contacts Mg(2+). Ser-254 bears the Phosphoserine mark. N6-acetyllysine is present on Lys-256. A Phosphoserine modification is found at Ser-263. Lys-281 carries the N6-acetyllysine; alternate modification. An N6-(2-hydroxyisobutyryl)lysine; alternate modification is found at Lys-281. Position 287 is a phosphotyrosine (Tyr-287). Ser-291 is modified (phosphoserine). Residues Glu-293 and Asp-318 each coordinate Mg(2+). Substrate is bound by residues Glu-293 and Asp-318. Residues Lys-335 and Lys-343 each carry the N6-acetyllysine modification. Lys-343 functions as the Proton acceptor in the catalytic mechanism. Substrate contacts are provided by residues Ser-370–Ser-373 and Lys-394. A required for interaction with PLG region spans residues Ala-405–Lys-434. Position 406 is an N6-acetyllysine (Lys-406). Residue Lys-420 is modified to N6-acetyllysine; alternate. Lys-420 bears the N6-succinyllysine; alternate mark. Lys-420 carries the N6-malonyllysine; alternate modification.

The protein belongs to the enolase family. As to quaternary structure, mammalian enolase is composed of 3 isozyme subunits, alpha, beta and gamma, which can form homodimers or heterodimers which are cell-type and development-specific. ENO1 interacts with PLG in the neuronal plasma membrane and promotes its activation. The C-terminal lysine is required for this binding. Interacts with ENO4 and PGAM2. Interacts with CMTM6. Requires Mg(2+) as cofactor. ISGylated. In terms of processing, lysine 2-hydroxyisobutyrylation (Khib) by p300/EP300 activates the phosphopyruvate hydratase activity. As to expression, the alpha/alpha homodimer is expressed in embryo and in most adult tissues. The alpha/beta heterodimer and the beta/beta homodimer are found in striated muscle, and the alpha/gamma heterodimer and the gamma/gamma homodimer in neurons.

The protein localises to the cytoplasm. It is found in the cell membrane. It catalyses the reaction (2R)-2-phosphoglycerate = phosphoenolpyruvate + H2O. Its pathway is carbohydrate degradation; glycolysis; pyruvate from D-glyceraldehyde 3-phosphate: step 4/5. Its function is as follows. Glycolytic enzyme the catalyzes the conversion of 2-phosphoglycerate to phosphoenolpyruvate. In addition to glycolysis, involved in various processes such as growth control, hypoxia tolerance and allergic responses. May also function in the intravascular and pericellular fibrinolytic system due to its ability to serve as a receptor and activator of plasminogen on the cell surface of several cell-types such as leukocytes and neurons. Stimulates immunoglobulin production. The chain is Alpha-enolase (ENO1) from Bos taurus (Bovine).